The following is a 125-amino-acid chain: Small ribosomal subunit protein uS12 (125 aa).

Residue D89 is modified to 3-methylthioaspartic acid.

The protein belongs to the universal ribosomal protein uS12 family. In terms of assembly, part of the 30S ribosomal subunit. Contacts proteins S8 and S17. May interact with IF1 in the 30S initiation complex.

Functionally, with S4 and S5 plays an important role in translational accuracy. Its function is as follows. Interacts with and stabilizes bases of the 16S rRNA that are involved in tRNA selection in the A site and with the mRNA backbone. Located at the interface of the 30S and 50S subunits, it traverses the body of the 30S subunit contacting proteins on the other side and probably holding the rRNA structure together. The combined cluster of proteins S8, S12 and S17 appears to hold together the shoulder and platform of the 30S subunit. The chain is Small ribosomal subunit protein uS12 from Cupriavidus pinatubonensis (strain JMP 134 / LMG 1197) (Cupriavidus necator (strain JMP 134)).